The following is a 392-amino-acid chain: MALFNVEGWSIKTKTVAFDNKTNKSSKDKKKNNRKNGKLTREQKLKEETEAELKEQVEDIPSEGSVAKDIPKKNQEKSDQNETSKKRKHDEEAPLMQVKENIEKPTKKQLTPLQQKMMAKLTGSRFRWINEQLYTISSDEALKLIKEQPQLFDEYHDGFRSQVQAWPENPVDVFVDQIRYRCMKPVNAPGGLPGLKDSKEIVIADMGCGEAQLALEINNFFKNYNKKAKKYLKRRHKVHSFDLKKANERITVADIRNVPLPDESCTIVVFCLALMGTNFLDFIKEAYRILAPRGELWIAEIKSRFSDGKGNEFVDALKLMGFFHKKTFDENKMFTRFEFFKPPAEIIEERRQKLERRQKFIEVETEKEELEKKRRKIAEGKWLLKPCIYKRR.

Residues 1-96 (MALFNVEGWS…RKHDEEAPLM (96 aa)) are disordered. Over residues 27–38 (KDKKKNNRKNGK) the composition is skewed to basic residues. Residues 32–61 (NNRKNGKLTREQKLKEETEAELKEQVEDIP) adopt a coiled-coil conformation. Over residues 39–57 (LTREQKLKEETEAELKEQV) the composition is skewed to basic and acidic residues. Ser-62 carries the post-translational modification Phosphoserine. The segment covering 69–92 (DIPKKNQEKSDQNETSKKRKHDEE) has biased composition (basic and acidic residues). His-156, Gly-207, Asp-242, Asp-254, and Cys-271 together coordinate S-adenosyl-L-methionine. Positions 344-382 (AEIIEERRQKLERRQKFIEVETEKEELEKKRRKIAEGKW) form a coiled coil.

The protein belongs to the methyltransferase superfamily. RRP8 family.

It is found in the nucleus. The protein resides in the nucleolus. Its subcellular location is the chromosome. The protein localises to the telomere. The catalysed reaction is adenosine(645) in 25S rRNA + S-adenosyl-L-methionine = N(1)-methyladenosine(645) in 25S rRNA + S-adenosyl-L-homocysteine + H(+). Functionally, S-adenosyl-L-methionine-dependent methyltransferase that specifically methylates the N(1) position of adenine 645 in 25S rRNA. Required both for ribosomal 40S and 60S subunits biogenesis. Required for efficient pre-rRNA cleavage at site A2. Also involved in telomere length regulation and maintenance. In Saccharomyces cerevisiae (strain ATCC 204508 / S288c) (Baker's yeast), this protein is 25S rRNA (adenine(645)-N(1))-methyltransferase (RRP8).